The following is a 311-amino-acid chain: DNA-directed RNA polymerase subunit alpha (311 aa).

Residues 1 to 226 are alpha N-terminal domain (alpha-NTD); it reads MIEFEKPNIT…EHLDLFTNLT (226 aa). The segment at 243-311 is alpha C-terminal domain (alpha-CTD); that stretch reads DDRILDRTIE…IDLGLGLKDK (69 aa).

The protein belongs to the RNA polymerase alpha chain family. As to quaternary structure, homodimer. The RNAP catalytic core consists of 2 alpha, 1 beta, 1 beta' and 1 omega subunit. When a sigma factor is associated with the core the holoenzyme is formed, which can initiate transcription.

The enzyme catalyses RNA(n) + a ribonucleoside 5'-triphosphate = RNA(n+1) + diphosphate. In terms of biological role, DNA-dependent RNA polymerase catalyzes the transcription of DNA into RNA using the four ribonucleoside triphosphates as substrates. The chain is DNA-directed RNA polymerase subunit alpha from Streptococcus pneumoniae serotype 4 (strain ATCC BAA-334 / TIGR4).